Consider the following 253-residue polypeptide: Ubiquinone/menaquinone biosynthesis C-methyltransferase UbiE (253 aa).

S-adenosyl-L-methionine is bound by residues Thr76, Asp97, and 125–126 (NA).

The protein belongs to the class I-like SAM-binding methyltransferase superfamily. MenG/UbiE family.

The enzyme catalyses a 2-demethylmenaquinol + S-adenosyl-L-methionine = a menaquinol + S-adenosyl-L-homocysteine + H(+). The catalysed reaction is a 2-methoxy-6-(all-trans-polyprenyl)benzene-1,4-diol + S-adenosyl-L-methionine = a 5-methoxy-2-methyl-3-(all-trans-polyprenyl)benzene-1,4-diol + S-adenosyl-L-homocysteine + H(+). It functions in the pathway quinol/quinone metabolism; menaquinone biosynthesis; menaquinol from 1,4-dihydroxy-2-naphthoate: step 2/2. It participates in cofactor biosynthesis; ubiquinone biosynthesis. Methyltransferase required for the conversion of demethylmenaquinol (DMKH2) to menaquinol (MKH2) and the conversion of 2-polyprenyl-6-methoxy-1,4-benzoquinol (DDMQH2) to 2-polyprenyl-3-methyl-6-methoxy-1,4-benzoquinol (DMQH2). This chain is Ubiquinone/menaquinone biosynthesis C-methyltransferase UbiE, found in Stenotrophomonas maltophilia (strain K279a).